The following is a 247-amino-acid chain: Adenosylcobinamide-GDP ribazoletransferase (247 aa).

The next 5 membrane-spanning stretches (helical) occupy residues 34-54 (IITF…VFMA), 59-79 (FGVP…TGGF), 113-133 (GGLA…ELAL), 138-158 (ILAS…LLMY), and 194-214 (VLLP…AIFI).

This sequence belongs to the CobS family. Mg(2+) is required as a cofactor.

Its subcellular location is the cell inner membrane. The catalysed reaction is alpha-ribazole + adenosylcob(III)inamide-GDP = adenosylcob(III)alamin + GMP + H(+). It carries out the reaction alpha-ribazole 5'-phosphate + adenosylcob(III)inamide-GDP = adenosylcob(III)alamin 5'-phosphate + GMP + H(+). Its pathway is cofactor biosynthesis; adenosylcobalamin biosynthesis; adenosylcobalamin from cob(II)yrinate a,c-diamide: step 7/7. Functionally, joins adenosylcobinamide-GDP and alpha-ribazole to generate adenosylcobalamin (Ado-cobalamin). Also synthesizes adenosylcobalamin 5'-phosphate from adenosylcobinamide-GDP and alpha-ribazole 5'-phosphate. In Escherichia coli O17:K52:H18 (strain UMN026 / ExPEC), this protein is Adenosylcobinamide-GDP ribazoletransferase.